The primary structure comprises 576 residues: MEARGKVVGVIGNLVTIEIVGTVSMNEIVFIKTGGRSLKAEIIRIRDGEVDAQVFEMTKGIAVGDDIEFTDKLLTVELGPGLLSQVYDGLQNPLSELAAQCGFFLERGLYLSALDRSKKWSFNATAKVGDIVVAGDYLGFVVEGTIKHKIMVPFYRKDSYKIVEIVSDGNYTVDDKIAVIENDAGGRHVITMSFHWPVKVPITSYKDRLIPSEPMVTQTRIIDTFFPVAKGGTFCIPGPFGAGKTVLQQVTSRNADVDVVIIAACGERAGEVVETLKEFPELIDPRTGKSLMDRTCIICNTSSMPVAAREASVYTAITIGEYYRQMGLDILLLADSTSRWAQAMREMSGRLEEIPGEEAFPAYLESVIASFYERAGIVVLNDGNVGSVTVGGSVSPAGGNFEEPVTQATLKVVGAFHGLTRERSDARKFPAINPLESWSKYRGVVESEKTGYARSFLAKGNEINQMMKVVGEEGISIGDFLVYLKSELLDACYLQQNSFDSVDTAVSPERQNYMFDILYDILQSDFKFENKLEARSFVNELRQNILDMNLNPFKEEKFNKLENTLKDLVRSKKLDF.

238–245 (GPFGAGKT) serves as a coordination point for ATP.

This sequence belongs to the ATPase alpha/beta chains family.

The catalysed reaction is ATP + H2O + 4 H(+)(in) = ADP + phosphate + 5 H(+)(out). Functionally, produces ATP from ADP in the presence of a proton gradient across the membrane. The V-type alpha chain is a catalytic subunit. The protein is V-type ATP synthase alpha chain of Borrelia turicatae (strain 91E135).